The sequence spans 305 residues: Tyrosine recombinase XerD (305 aa).

Residues 2 to 87 (SQGEAWADAF…AVRQFYRFVL (86 aa)) enclose the Core-binding (CB) domain. Residues 108-295 (PLPKVLERDE…AGEHLAHIVQ (188 aa)) form the Tyr recombinase domain. Active-site residues include Arg149, Lys173, His247, Arg250, and His273. Tyr282 serves as the catalytic O-(3'-phospho-DNA)-tyrosine intermediate.

This sequence belongs to the 'phage' integrase family. XerD subfamily. Forms a cyclic heterotetrameric complex composed of two molecules of XerC and two molecules of XerD.

It localises to the cytoplasm. Site-specific tyrosine recombinase, which acts by catalyzing the cutting and rejoining of the recombining DNA molecules. The XerC-XerD complex is essential to convert dimers of the bacterial chromosome into monomers to permit their segregation at cell division. It also contributes to the segregational stability of plasmids. The sequence is that of Tyrosine recombinase XerD from Caulobacter vibrioides (strain ATCC 19089 / CIP 103742 / CB 15) (Caulobacter crescentus).